Reading from the N-terminus, the 283-residue chain is MTAQVLDGKATAAAIREELKERVAALRARGVVPGLGTILVGDDPGSHAYVRGKHRDCAEVGIASIRKDLPADATQADVEAAVAELNADPACTGFIVQLPLPRGLDENRVLEKIDPAKDADGLHPSNLGKLVLMEEAPLPCTPRGIVELLNRYGVSLRGAEVVVVGRGVTVGRPLGLLLTRRSENATVTLCHTGTRDLAAHTRRADIVVAAAGVPGLITKDMVSPGAVVLDVGVTRTEKGLVGDVAPDVAEVAGYLSPNPGGVGPMTRAMLLTNVVEAAERSLS.

Residues 165–167 (GRG), Thr-192, and Val-233 contribute to the NADP(+) site.

The protein belongs to the tetrahydrofolate dehydrogenase/cyclohydrolase family. In terms of assembly, homodimer.

It catalyses the reaction (6R)-5,10-methylene-5,6,7,8-tetrahydrofolate + NADP(+) = (6R)-5,10-methenyltetrahydrofolate + NADPH. The catalysed reaction is (6R)-5,10-methenyltetrahydrofolate + H2O = (6R)-10-formyltetrahydrofolate + H(+). It participates in one-carbon metabolism; tetrahydrofolate interconversion. Catalyzes the oxidation of 5,10-methylenetetrahydrofolate to 5,10-methenyltetrahydrofolate and then the hydrolysis of 5,10-methenyltetrahydrofolate to 10-formyltetrahydrofolate. The sequence is that of Bifunctional protein FolD from Thermobifida fusca (strain YX).